Consider the following 601-residue polypeptide: Tubulin polyglutamylase ttll-4 (601 aa).

Over residues 1 to 18 (MSSGYSSAPSVSHTSSDT) the composition is skewed to polar residues. The segment at 1–37 (MSSGYSSAPSVSHTSSDTDLNRIDSYDDGAEETTDEQ) is disordered. The TTL domain occupies 138 to 476 (QARLTWCHNS…YVPPSFDKLS (339 aa)). ATP contacts are provided by residues K254, 260 to 261 (RG), 282 to 285 (QHYI), and 295 to 297 (KFD). R260 is a binding site for a protein. R321 provides a ligand contact to L-glutamate. Position 342–343 (342–343 (TN)) interacts with ATP. 3 residues coordinate L-glutamate: Y344, S345, and K362. Mg(2+) is bound by residues D422, E435, and N437. K453 contributes to the L-glutamate binding site.

This sequence belongs to the tubulin--tyrosine ligase family. It depends on Mg(2+) as a cofactor. In terms of tissue distribution, expressed in many sensory neurons in amphid.

The catalysed reaction is L-glutamyl-[protein] + L-glutamate + ATP = gamma-L-glutamyl-L-glutamyl-[protein] + ADP + phosphate + H(+). Its function is as follows. Monoglutamylase which modifies tubulin, adding a single glutamate on the gamma-carboxyl group of specific glutamate residues of target proteins. Involved in the side-chain initiation step of the polyglutamylation reaction but not in the elongation step. Preferentially modifies beta-tail tubulin over the alpha-tubulin. Involved in side-chain glutamylation of tubulin in sensory cilia. Together with ttll-5 and ttll-11, required for male mating. The protein is Tubulin polyglutamylase ttll-4 of Caenorhabditis elegans.